Here is a 483-residue protein sequence, read N- to C-terminus: Auxin transporter-like protein 2 (483 aa).

Topologically, residues 1 to 53 are cytoplasmic; the sequence is MENGEKAAETVVVGNYVEMEKDGKALDIKSKLSDMFWHGGSAYDAWFSCASNQ. Residues 54-71 traverse the membrane as a helical segment; the sequence is VAQVLLTLPYSFSQLGML. Over 72–73 the chain is Extracellular; sequence SG. A helical membrane pass occupies residues 74 to 94; that stretch reads ILFQLFYGILGSWTAYLISIL. The Cytoplasmic segment spans residues 95 to 130; that stretch reads YVEYRTRKEREKVNFRNHVIQWFEVLDGLLGKHWRN. Residues 131–151 traverse the membrane as a helical segment; that stretch reads VGLAFNCTFLLFGSVIQLIAC. Residues 152-166 lie on the Extracellular side of the membrane; sequence ASNIYYINDNLDKRT. The chain crosses the membrane as a helical span at residues 167-187; it reads WTYIFGACCATTVFIPSFHNY. The Cytoplasmic segment spans residues 188–190; it reads RIW. The helical transmembrane segment at 191–211 threads the bilayer; sequence SFLGLLMTTYTAWYLTIASIL. Topologically, residues 212-226 are extracellular; that stretch reads HGQVEGVKHSGPSKL. A helical transmembrane segment spans residues 227 to 247; the sequence is VLYFTGATNILYTFGGHAVTV. Topologically, residues 248-261 are cytoplasmic; sequence EIMHAMWKPQKFKS. The helical transmembrane segment at 262 to 282 threads the bilayer; it reads IYLFATLYVLTLTLPSASAVY. At 283–306 the chain is on the extracellular side; sequence WAFGDLLLNHSNAFALLPKNLYRD. N291 is a glycosylation site (N-linked (GlcNAc...) asparagine). Residues 307 to 327 traverse the membrane as a helical segment; the sequence is FAVVLMLIHQFITFGFACTPL. At 328 to 350 the chain is on the cytoplasmic side; sequence YFVWEKLIGMHECRSMCKRAAAR. A helical membrane pass occupies residues 351-371; sequence LPVVIPIWFLAIIFPFFGPIN. The Extracellular portion of the chain corresponds to 372 to 374; that stretch reads STV. The helical transmembrane segment at 375–395 threads the bilayer; that stretch reads GSLLVSFTVYIIPALAHIFTF. The Cytoplasmic segment spans residues 396 to 422; that stretch reads RSSAARENAVEQPPRFLGRWTGAFTIN. Residues 423–443 form a helical membrane-spanning segment; the sequence is AFIVVWVFIVGFGFGGWASMI. At 444–483 the chain is on the extracellular side; sequence NFVHQIDTFGLFTKCYQCPPPVMVSPPPISHPHFNHTHGL. N478 carries N-linked (GlcNAc...) asparagine glycosylation.

This sequence belongs to the amino acid/polyamine transporter 2 family. Amino acid/auxin permease (AAAP) (TC 2.A.18.1) subfamily.

Its subcellular location is the cell membrane. Carrier protein involved in proton-driven auxin influx. Mediates the formation of auxin gradient from developing leaves (site of auxin biosynthesis) to tips by contributing to the loading of auxin in vascular tissues and facilitating acropetal (base to tip) auxin transport within inner tissues of the root apex, and basipetal (tip to base) auxin transport within outer tissues of the root apex. The chain is Auxin transporter-like protein 2 (LAX2) from Arabidopsis thaliana (Mouse-ear cress).